A 330-amino-acid chain; its full sequence is MNLLKRATFIFSEQPLSLAIVIERSFSLGSSGMDNVIPLVRNTIPPLTSKKHKGQDGRIGIIGGCQEYTGAPFFAAISALKVGADLSHVFCTKDAAPVIKSYSPELIVHPVLDSPNAVEEIEKWLPRLHSVVVGPGLGREDMLLKNAKEIIERSKLRGIPVIIDADGLWLVAKEPSVIQGYQRGILTPNFMEFTRLYEAMHHEPLDSSDHKRSAQQLSIALGHLTLVLKGEEDIITDGKNILTCSQEGSGRRCGGQGDLLSGSLGAFAHWAFSSPSDATKGMNPSLVAAFGATSLTRQCNRQAFHKHGRSTTTSDMIQEINSAFKKLFES.

A YjeF C-terminal domain is found at 36 to 327 (VIPLVRNTIP…QEINSAFKKL (292 aa)). Residues Gly136 and 189–195 (NFMEFTR) each bind (6S)-NADPHX. ATP-binding positions include 229–233 (KGEED) and 248–257 (GSGRRCGGQG). Asp258 is a (6S)-NADPHX binding site.

This sequence belongs to the NnrD/CARKD family. Requires Mg(2+) as cofactor.

It catalyses the reaction (6S)-NADHX + ATP = ADP + phosphate + NADH + H(+). The enzyme catalyses (6S)-NADPHX + ATP = ADP + phosphate + NADPH + H(+). Catalyzes the dehydration of the S-form of NAD(P)HX at the expense of ATP, which is converted to ADP. Together with NAD(P)HX epimerase, which catalyzes the epimerization of the S- and R-forms, the enzyme allows the repair of both epimers of NAD(P)HX, a damaged form of NAD(P)H that is a result of enzymatic or heat-dependent hydration. This Danio rerio (Zebrafish) protein is ATP-dependent (S)-NAD(P)H-hydrate dehydratase.